A 259-amino-acid chain; its full sequence is Probable metal transport system ATP-binding protein CPn_0348/CP_0412/CPj0348/CpB0355 (259 aa).

An ABC transporter domain is found at 3–241; the sequence is VKDETFWSVH…TIFQTYGCEI (239 aa). 41–48 is a binding site for ATP; that stretch reads GPNGAGKS.

This sequence belongs to the ABC transporter superfamily.

The protein localises to the cell inner membrane. Its function is as follows. Part of an ATP-driven transport system CPn0346/CPn0347/CPn0348/CPn0349 for a metal. Probably responsible for energy coupling to the transport system. The protein is Probable metal transport system ATP-binding protein CPn_0348/CP_0412/CPj0348/CpB0355 of Chlamydia pneumoniae (Chlamydophila pneumoniae).